A 397-amino-acid polypeptide reads, in one-letter code: MAPSPAAAMPLAAEPDEVVVEVEEEEERGVKGGGGVAGLDEVEGLVVGSYCHDVLLRGGRVVGETLGGAAAFVSNVLDAASPAGASLAVVSKVGHDFAYATAAAPARHPPVLCASPTTSFHARFSDDAASAHAPDRQLRRVHACDPIYPADLPDRRFAYGLAVGVAGEVLPETLERMIRLCRAVLVDAQALIRAFDGEAKGGGAVRHVALEATPYARLLPRVAFLKASSEEAPYVGVETARRRCCVIVTEGRDGCRLYWDGGEARVAPFPAVQVDPTGAGDSFLAGFASGLLWGLSATDAALLGNFFGAAAVSQVGVPTFDPKMLQAVKQILEKAVKRPCTHINGNTFTFQRSSMHDELHKSLQEAAMLVCEQKQANSPATDNGDVCSINELTSLPS.

Residues Ser228, 278-281 (GAGD), and Asn305 contribute to the ATP site. Asp281 serves as the catalytic Proton acceptor.

Belongs to the carbohydrate kinase pfkB family. As to expression, expressed in roots, leaf blade shoots, leaf sheath shoots and panicles.

The catalysed reaction is myo-inositol + ATP = 1D-myo-inositol 3-phosphate + ADP + H(+). Its function is as follows. Kinase that phosphorylates myo-inositol to produce multiple myo-inositol monophosphates. Participates in phytic acid biosynthesis in developing seeds. Phytic acid is the primary storage form of phosphorus in cereal grains and other plant seeds. This chain is Inositol 3-kinase, found in Oryza sativa subsp. japonica (Rice).